The primary structure comprises 955 residues: 2-oxoglutarate dehydrogenase E1 component (955 aa).

It belongs to the alpha-ketoglutarate dehydrogenase family. Homodimer. Part of the 2-oxoglutarate dehydrogenase (OGDH) complex composed of E1 (2-oxoglutarate dehydrogenase), E2 (dihydrolipoamide succinyltransferase) and E3 (dihydrolipoamide dehydrogenase); the complex contains multiple copies of the three enzymatic components (E1, E2 and E3). Thiamine diphosphate serves as cofactor.

The catalysed reaction is N(6)-[(R)-lipoyl]-L-lysyl-[protein] + 2-oxoglutarate + H(+) = N(6)-[(R)-S(8)-succinyldihydrolipoyl]-L-lysyl-[protein] + CO2. Its function is as follows. E1 component of the 2-oxoglutarate dehydrogenase (OGDH) complex which catalyzes the decarboxylation of 2-oxoglutarate, the first step in the conversion of 2-oxoglutarate to succinyl-CoA and CO(2). The protein is 2-oxoglutarate dehydrogenase E1 component of Bacillus cereus (strain ATCC 10987 / NRS 248).